The sequence spans 240 residues: Probable peptide export permease protein YydJ (240 aa).

A run of 6 helical transmembrane segments spans residues 13–33, 50–70, 97–117, 126–146, 153–173, and 210–230; these read VIII…FLLV, SYTV…AFFI, IAVL…IISL, ALLL…IGTI, ILIS…LVAI, and VLFI…VLRF.

As to quaternary structure, the complex is composed of 2 ATP-binding proteins (YydI), two transmembrane proteins (YydJ).

The protein localises to the cell membrane. Functionally, suggested to be part of an ABC transporter complex YydIJ involved in export of the modified peptide YydF. This is Probable peptide export permease protein YydJ (yydJ) from Bacillus subtilis (strain 168).